Reading from the N-terminus, the 102-residue chain is RxLR effector protein PexRD41 (102 aa).

The signal sequence occupies residues 1–21 (MRSIFYFALAFAALTCSNASA). The RxLR-dEER motif lies at 39–53 (RSLRVAGQEAARGEE).

It belongs to the RxLR effector family. Interacts with host KRBP1.

It localises to the secreted. It is found in the host cytoplasm. Its subcellular location is the host nucleus. The protein localises to the host nucleolus. Effector that enhances P.infestans colonization of host plant leaves. During the early stages of P.infestans infection, interacts with and stabilizes host potato K-homology (KH) RNA-binding protein KRBP1, leading to its accumulation. In Phytophthora infestans (strain T30-4) (Potato late blight agent), this protein is RxLR effector protein PexRD41.